Here is a 1259-residue protein sequence, read N- to C-terminus: Receptor tyrosine-protein kinase erbB-2 (1259 aa).

The N-terminal stretch at 1 to 22 is a signal peptide; the sequence is MELAAWCRWGLLLALLPSGAAG. Over 23-653 the chain is Extracellular; that stretch reads TQVCTGTDMK…EQRASPVTSI (631 aa). Cysteines 26 and 53 form a disulfide. The N-linked (GlcNAc...) asparagine glycan is linked to Asn68. 13 cysteine pairs are disulfide-bonded: Cys162–Cys192, Cys195–Cys204, Cys199–Cys212, Cys220–Cys227, Cys224–Cys235, Cys236–Cys244, Cys240–Cys252, Cys255–Cys264, Cys268–Cys295, Cys299–Cys311, Cys315–Cys331, Cys334–Cys338, and Cys342–Cys367. Phosphothreonine is present on Thr182. Residue Asn259 is glycosylated (N-linked (GlcNAc...) asparagine). The N-linked (GlcNAc...) asparagine glycan is linked to Asn421. 3 disulfide bridges follow: Cys475/Cys504, Cys511/Cys519, and Cys514/Cys527. Asn529 is a glycosylation site (N-linked (GlcNAc...) asparagine). 8 disulfides stabilise this stretch: Cys530/Cys539, Cys543/Cys559, Cys562/Cys575, Cys566/Cys583, Cys586/Cys595, Cys599/Cys622, Cys625/Cys633, and Cys629/Cys641. Residue Asn570 is glycosylated (N-linked (GlcNAc...) asparagine). An N-linked (GlcNAc...) asparagine glycan is attached at Asn628. Residues 654–674 form a helical membrane-spanning segment; that stretch reads IAAVVGILLAVVVGLVLGILI. The interval 675-688 is required for interaction with KPNB1 and EEA1; that stretch reads KRRRQKIRKYTMRR. The Nuclear localization signal motif lies at 675–688; sequence KRRRQKIRKYTMRR. At 675–1259 the chain is on the cytoplasmic side; the sequence is KRRRQKIRKY…PEYLGLDVPV (585 aa). The 268-residue stretch at 719-986 folds into the Protein kinase domain; it reads LRKVKVLGSG…RMARDPQRFV (268 aa). ATP is bound by residues 725–733 and Lys752; that span reads LGSGAFGTV. The active-site Proton acceptor is the Asp844. The residue at position 876 (Tyr876) is a Phosphotyrosine. Positions 1027 to 1183 are disordered; that stretch reads QGFFCPEPTP…PKTLSPGKNG (157 aa). Ser1077, Ser1082, and Ser1106 each carry phosphoserine. The residue at position 1111 (Tyr1111) is a Phosphotyrosine. Tyr1138 carries the post-translational modification Phosphotyrosine; by autocatalysis. Residues 1145-1160 are compositionally biased toward pro residues; the sequence is WPQPPLALEGPLPPSR. The residue at position 1165 (Thr1165) is a Phosphothreonine. The tract at residues 1199 to 1201 is interaction with PIK3C2B; that stretch reads EYL. The residue at position 1200 (Tyr1200) is a Phosphotyrosine. A disordered region spans residues 1203–1259; that stretch reads PRGRAAPQPHPPPAFSPAFDNLYYWDQDPSERGSPPSTFEGTPTAENPEYLGLDVPV. Polar residues predominate over residues 1237 to 1247; sequence PPSTFEGTPTA. The residue at position 1252 (Tyr1252) is a Phosphotyrosine; by autocatalysis.

This sequence belongs to the protein kinase superfamily. Tyr protein kinase family. EGF receptor subfamily. As to quaternary structure, homodimer. Heterodimer with EGFR, ERBB3 and ERBB4. Part of a complex with EGFR and either PIK3C2A or PIK3C2B. May interact with PIK3C2B when phosphorylated on Tyr-1200. Interacts with PRKCABP and PLXNB1. Interacts (when phosphorylated on Tyr-1252) with MEMO1. Interacts with MUC1. Interacts (when phosphorylated on Tyr-1138) with GRB7 (via SH2 domain). Interacts (when phosphorylated on Tyr-1252) with ERBIN. Interacts with SRC, KPNB1, PTK6, RANBP2, EEA1, CRM1, CLTC, RPA194, MYOC and ACTB. Interacts (preferentially with the tyrosine phosphorylated form) with CPNE3; this interaction occurs at the cell membrane and is increased in a growth factor heregulin-dependent manner. Interacts with HSP90AA1 and HSP90AB1 in an ATP-dependent manner; the interaction suppresses ERBB2 kinase activity. Interacts with SORL1; this interaction regulates ERBB2 subcellular distribution by promoting its recycling after internalization from endosomes back to the plasma membrane, hence stimulates ERBB2-mediated signaling. Interacts with SH3BGRL. Interacts with ROR1. Post-translationally, autophosphorylated. Autophosphorylation occurs in trans, i.e. one subunit of the dimeric receptor phosphorylates tyrosine residues on the other subunit. Ligand-binding increases phosphorylation on tyrosine residues. Signaling via SEMA4C promotes phosphorylation at Tyr-1252. Dephosphorylated by PTPN12.

The protein resides in the cell membrane. It is found in the cell projection. The protein localises to the ruffle membrane. It localises to the early endosome. Its subcellular location is the cytoplasm. The protein resides in the perinuclear region. It is found in the nucleus. The catalysed reaction is L-tyrosyl-[protein] + ATP = O-phospho-L-tyrosyl-[protein] + ADP + H(+). Functionally, protein tyrosine kinase that is part of several cell surface receptor complexes, but that apparently needs a coreceptor for ligand binding. Essential component of a neuregulin-receptor complex, although neuregulins do not interact with it alone. GP30 is a potential ligand for this receptor. Regulates outgrowth and stabilization of peripheral microtubules (MTs). Upon ERBB2 activation, the MEMO1-RHOA-DIAPH1 signaling pathway elicits the phosphorylation and thus the inhibition of GSK3B at cell membrane. This prevents the phosphorylation of APC and CLASP2, allowing its association with the cell membrane. In turn, membrane-bound APC allows the localization of MACF1 to the cell membrane, which is required for microtubule capture and stabilization. Its function is as follows. In the nucleus is involved in transcriptional regulation. Associates with the 5'-TCAAATTC-3' sequence in the PTGS2/COX-2 promoter and activates its transcription. Implicated in transcriptional activation of CDKN1A; the function involves STAT3 and SRC. Involved in the transcription of rRNA genes by RNA Pol I and enhances protein synthesis and cell growth. The polypeptide is Receptor tyrosine-protein kinase erbB-2 (ERBB2) (Canis lupus familiaris (Dog)).